Reading from the N-terminus, the 66-residue chain is Putative alpha-neurotoxin RjAa13 (66 aa).

An LCN-type CS-alpha/beta domain is found at 1-60 (KEGYPVDWGNCKYECMSDAYCKDLCVDRKAKSGYCYKLNWSCYCEGLPDDSPIKTNGHCR). 4 disulfide bridges follow: cysteine 11/cysteine 59, cysteine 15/cysteine 35, cysteine 21/cysteine 42, and cysteine 25/cysteine 44.

Belongs to the long (4 C-C) scorpion toxin superfamily. Sodium channel inhibitor family. Alpha subfamily. Expressed by the venom gland.

The protein localises to the secreted. Functionally, alpha toxins bind voltage-independently at site-3 of sodium channels (Nav) and inhibits the inactivation of the activated channels, thereby blocking neuronal transmission. The sequence is that of Putative alpha-neurotoxin RjAa13 from Rhopalurus junceus (Caribbean blue scorpion).